Consider the following 445-residue polypeptide: Phosphoglucosamine mutase 1 (445 aa).

Ser-102 serves as the catalytic Phosphoserine intermediate. Residues Ser-102, Asp-241, Asp-243, and Asp-245 each contribute to the Mg(2+) site. A Phosphoserine modification is found at Ser-102.

It belongs to the phosphohexose mutase family. It depends on Mg(2+) as a cofactor. In terms of processing, activated by phosphorylation.

It carries out the reaction alpha-D-glucosamine 1-phosphate = D-glucosamine 6-phosphate. Catalyzes the conversion of glucosamine-6-phosphate to glucosamine-1-phosphate. The chain is Phosphoglucosamine mutase 1 from Shewanella sp. (strain MR-4).